The sequence spans 213 residues: Adenylate kinase (213 aa).

Position 10–15 (10–15 (GAGKGT)) interacts with ATP. The tract at residues 30-59 (STGDMFRAAMANQTEMGILAKSYIDKGDLV) is NMP. AMP is bound by residues T31, R36, 57-59 (DLV), 86-89 (GYPR), and Q93. An LID region spans residues 127–160 (GRIIHKETGETFHKVFNPPVGDYKEEDFYQREDD). ATP-binding positions include R128 and 137–138 (TF). AMP contacts are provided by R157 and R168. Q196 is a binding site for ATP.

The protein belongs to the adenylate kinase family. As to quaternary structure, monomer.

The protein resides in the cytoplasm. It carries out the reaction AMP + ATP = 2 ADP. It functions in the pathway purine metabolism; AMP biosynthesis via salvage pathway; AMP from ADP: step 1/1. Functionally, catalyzes the reversible transfer of the terminal phosphate group between ATP and AMP. Plays an important role in cellular energy homeostasis and in adenine nucleotide metabolism. The polypeptide is Adenylate kinase (Streptococcus suis (strain 98HAH33)).